The following is a 268-amino-acid chain: Single-stranded DNA-binding protein WHY3, chloroplastic (268 aa).

Residues 1 to 75 constitute a chloroplast transit peptide; that stretch reads MSQLLSSPPM…KQRFGDSSSS (75 aa). Residues 93-98 form a required for ssDNA binding region; it reads KGKAAL. The Nuclear localization signal signature appears at 171–185; it reads KGKGSDEGKVRKVLK.

It belongs to the Whirly family. Homotetramer.

The protein resides in the plastid. It localises to the chloroplast. It is found in the nucleus. Functionally, single-stranded DNA-binding protein that functions in both chloroplasts and nucleus. In chloroplasts, maintains plastid genome stability by preventing break-induced and short homology-dependent illegitimate recombinations. In the nucleus, is recruited to a distal element upstream of the kinesin KP1 to mediate the transcriptional repression of KP1. Can bind double-stranded DNA in vivo. The protein is Single-stranded DNA-binding protein WHY3, chloroplastic (WHY3) of Arabidopsis thaliana (Mouse-ear cress).